We begin with the raw amino-acid sequence, 409 residues long: Phosphoglycerate kinase (409 aa).

Substrate contacts are provided by residues 23–25 (DIN), 63–66 (HQSR), Arg-120, and Arg-160. Residues Glu-333 and 359–362 (GGHL) each bind ATP.

This sequence belongs to the phosphoglycerate kinase family. In terms of assembly, monomer.

It localises to the cytoplasm. It catalyses the reaction (2R)-3-phosphoglycerate + ATP = (2R)-3-phospho-glyceroyl phosphate + ADP. It participates in carbohydrate degradation; glycolysis; pyruvate from D-glyceraldehyde 3-phosphate: step 2/5. The chain is Phosphoglycerate kinase (pgk) from Methanobacterium bryantii.